The following is a 209-amino-acid chain: MADTKEIKRVLLGPLLDNNPIALQVLGVCSALAVTTKLETALVMTIAVTLVTAFSNFFISLIRNYIPGSVRIIVQMAIIASLVIVVDQVLQAYAYEISKQLSVFVGLIITNCIVMGRAEAYAMKSPPIESFMDGIGNGLGYGVILILVGFLRELFGSGKLFGITVMESIQNGGWYQPNGLFLLAPSAFFIIGLLIWGLRTLKPAQVEED.

Transmembrane regions (helical) follow at residues 42–62, 66–86, 103–123, 131–151, and 178–198; these read LVMTIAVTLVTAFSNFFISLI, IPGSVRIIVQMAIIASLVIVV, VFVGLIITNCIVMGRAEAYAM, FMDGIGNGLGYGVILILVGFL, and NGLFLLAPSAFFIIGLLIWGL.

This sequence belongs to the NqrDE/RnfAE family. Composed of six subunits; NqrA, NqrB, NqrC, NqrD, NqrE and NqrF.

It is found in the cell inner membrane. The enzyme catalyses a ubiquinone + n Na(+)(in) + NADH + H(+) = a ubiquinol + n Na(+)(out) + NAD(+). NQR complex catalyzes the reduction of ubiquinone-1 to ubiquinol by two successive reactions, coupled with the transport of Na(+) ions from the cytoplasm to the periplasm. NqrA to NqrE are probably involved in the second step, the conversion of ubisemiquinone to ubiquinol. This is Na(+)-translocating NADH-quinone reductase subunit D from Proteus mirabilis (strain HI4320).